Here is a 177-residue protein sequence, read N- to C-terminus: Putative membrane protein 165 (177 aa).

Residues 1 to 7 lie on the Intravirion side of the membrane; sequence MYLVLLI. Residues 8 to 24 form a helical membrane-spanning segment; that stretch reads AVILFIIVILMIFLISG. Residues 25 to 166 are Virion surface-facing; it reads LFYPEQEPAL…DPHPALKSKN (142 aa).

It belongs to the asfivirus envelope protein p22 family.

Its subcellular location is the virion membrane. The protein resides in the host cell membrane. This chain is Putative membrane protein 165, found in African swine fever virus (isolate Pig/Kenya/KEN-50/1950) (ASFV).